A 390-amino-acid chain; its full sequence is MMQSATVPAEGAVKGLPEMLGVPMQQIPQCAGCNQHILDKFILKVLDRHWHSSCLKCADCQMQLADRCFSRAGSVYCKEDFFKRFGTKCTACQQGIPPTQVVRKAQDFVYHLHCFACIICNRQLATGDEFYLMEDGRLVCKEDYETAKQNDDSEAGAKRPRTTITAKQLETLKNAYKNSPKPARHVREQLSSETGLDMRVVQVWFQNRRAKEKRLKKDAGRHRWGQFYKSVKRSRGSSKQEKESSAEDCGVSDSELSFREDQILSELGHTNRIYGNVGDVTGGQLMNGSFSMDGTGQSYQDLRDGSPYGIPQSPSSISSLPSHAPLLNGLDYTVDSNLGIIAHAGQGVSQTLRAMAGGPTSDISTGSSVGYPDFPTSPGSWLDEMDHPPF.

2 consecutive LIM zinc-binding domains span residues 28–87 and 88–150; these read PQCA…RFGT and KCTA…AKQN. The segment at residues 157 to 216 is a DNA-binding region (homeobox); it reads AKRPRTTITAKQLETLKNAYKNSPKPARHVREQLSSETGLDMRVVQVWFQNRRAKEKRLK. The segment at 161 to 181 is interaction with DNA; sequence RTTITAKQLETLKNAYKNSPK. The interaction with 5-mCpG DNA stretch occupies residues 199–211; that stretch reads RVVQVWFQNRRAK. Disordered stretches follow at residues 230–253 and 356–390; these read SVKR…GVSD and AGGP…HPPF.

The protein localises to the nucleus. Its function is as follows. May play a critical role in the development of respiratory control mechanisms and in the normal growth and maturation of the lung. Binds preferentially to methylated DNA. This is LIM/homeobox protein Lhx4 (LHX4) from Homo sapiens (Human).